The chain runs to 340 residues: 4-amino-5-hydroxymethyl-2-methylpyrimidine phosphate synthase THI13 (340 aa).

An N6-(pyridoxal phosphate)lysine modification is found at K62. The active site involves H66. A pyridoxal 5'-phosphate-binding site is contributed by 115–118 (GEFG). Residues 195–199 (CCCFC) carry the CCCFC; essential for catalytic activity, may be the site of iron coordination motif.

The protein belongs to the NMT1/THI5 family. Homodimer. It depends on Fe cation as a cofactor.

It catalyses the reaction N(6)-(pyridoxal phosphate)-L-lysyl-[4-amino-5-hydroxymethyl-2-methylpyrimidine phosphate synthase] + L-histidyl-[4-amino-5-hydroxymethyl-2-methylpyrimidine phosphate synthase] + 2 Fe(3+) + 4 H2O = L-lysyl-[4-amino-5-hydroxymethyl-2-methylpyrimidine phosphate synthase] + (2S)-2-amino-5-hydroxy-4-oxopentanoyl-[4-amino-5-hydroxymethyl-2-methylpyrimidine phosphate synthase] + 4-amino-2-methyl-5-(phosphooxymethyl)pyrimidine + 3-oxopropanoate + 2 Fe(2+) + 2 H(+). The protein operates within cofactor biosynthesis; thiamine diphosphate biosynthesis. Responsible for the formation of the pyrimidine heterocycle in the thiamine biosynthesis pathway. Catalyzes the formation of hydroxymethylpyrimidine phosphate (HMP-P) from histidine and pyridoxal phosphate (PLP). The protein uses PLP and the active site histidine to form HMP-P, generating an inactive enzyme. The enzyme can only undergo a single turnover, which suggests it is a suicide enzyme. The protein is 4-amino-5-hydroxymethyl-2-methylpyrimidine phosphate synthase THI13 of Saccharomyces cerevisiae (strain ATCC 204508 / S288c) (Baker's yeast).